The sequence spans 352 residues: Inhibin beta C chain (352 aa).

The signal sequence occupies residues methionine 1–alanine 18. Residues threonine 19–arginine 236 constitute a propeptide that is removed on maturation. Residues asparagine 110, asparagine 143, and asparagine 161 are each glycosylated (N-linked (GlcNAc...) asparagine). Disulfide bonds link cysteine 240/cysteine 248, cysteine 247/cysteine 317, cysteine 276/cysteine 349, and cysteine 280/cysteine 351.

Belongs to the TGF-beta family. As to quaternary structure, homodimeric or heterodimeric through association with alpha and beta subunits, linked by one or more disulfide bonds. Inhibins are heterodimers of one alpha and one beta subunit. Activins are homo- or heterodimers of beta subunits only. Expressed in benign prostatic hyperplasia.

The protein resides in the secreted. Functionally, inhibins and activins inhibit and activate, respectively, the secretion of follitropin by the pituitary gland. Inhibins/activins are involved in regulating a number of diverse functions such as hypothalamic and pituitary hormone secretion, gonadal hormone secretion, germ cell development and maturation, erythroid differentiation, insulin secretion, nerve cell survival, embryonic axial development or bone growth, depending on their subunit composition. Inhibins appear to oppose the functions of activins. This Homo sapiens (Human) protein is Inhibin beta C chain (INHBC).